A 185-amino-acid polypeptide reads, in one-letter code: MKMIVGLGNIGRQYAQTRHNVGFMIVDELASKLNVTFQTSKFEAQVATAFQDGEKILLVKPATYMNDSGRAVGPLMSYYNVDPADLLVIHDDLDLPLGKVRLKQKGSAGGHNGIKSIISHVGDQHFKRVKVGIDHPQKMSVVDYVLGKFTPAEVAKFDDAKITALAAVEAWLANDDFTAVMNQYN.

Tyrosine 14 serves as a coordination point for tRNA. The active-site Proton acceptor is histidine 19. TRNA contacts are provided by tyrosine 64, asparagine 66, and asparagine 112.

This sequence belongs to the PTH family. As to quaternary structure, monomer.

The protein resides in the cytoplasm. The enzyme catalyses an N-acyl-L-alpha-aminoacyl-tRNA + H2O = an N-acyl-L-amino acid + a tRNA + H(+). Its function is as follows. Hydrolyzes ribosome-free peptidyl-tRNAs (with 1 or more amino acids incorporated), which drop off the ribosome during protein synthesis, or as a result of ribosome stalling. Catalyzes the release of premature peptidyl moieties from peptidyl-tRNA molecules trapped in stalled 50S ribosomal subunits, and thus maintains levels of free tRNAs and 50S ribosomes. This chain is Peptidyl-tRNA hydrolase, found in Lactiplantibacillus plantarum (strain ATCC BAA-793 / NCIMB 8826 / WCFS1) (Lactobacillus plantarum).